The sequence spans 68 residues: Large ribosomal subunit protein uL29 (68 aa).

Belongs to the universal ribosomal protein uL29 family.

This Limosilactobacillus reuteri (strain DSM 20016) (Lactobacillus reuteri) protein is Large ribosomal subunit protein uL29.